A 62-amino-acid chain; its full sequence is Large ribosomal subunit protein bL28 (62 aa).

The protein belongs to the bacterial ribosomal protein bL28 family.

The protein is Large ribosomal subunit protein bL28 of Helicobacter pylori (strain P12).